The primary structure comprises 237 residues: Sulfolipid-1 exporter Sap (237 aa).

The next 6 helical transmembrane spans lie at 5-25 (VLVLALSVICEPVRIGLVVLM), 38-58 (FLCGGYTMAGGVAMVTLVVLG), 66-86 (FSVAEVQIGTGLIALLIAFAL), 141-161 (VSGLGAALPSANYMGAMAAIL), 171-191 (ALAVVTFNVVAFTVAEVPLVS), and 217-237 (DAALLVAAGGCLMLTLGLSNL).

Belongs to the peptidoglycolipid addressing protein (GAP) (TC 2.A.116) family.

Its subcellular location is the cell inner membrane. In terms of biological role, required for the transport across the inner membrane of sulfolipid-1 (SL-1), which is a major cell wall lipid of pathogenic mycobacteria. Could also transport SL1278 (2-palmitoyl-3-(C43)-phthioceranyl-alpha, alpha'-D-trehalose-2'-sulfate), which is the precursor of SL-1. May potentiate SL-1 levels and confer specificity for sulfolipids over structurally similar glycolipids. The chain is Sulfolipid-1 exporter Sap from Mycobacterium tuberculosis (strain ATCC 25618 / H37Rv).